The primary structure comprises 352 residues: tRNA-specific 2-thiouridylase MnmA (352 aa).

ATP contacts are provided by residues 11–18 (AMSGGVDS) and Met-37. The active-site Nucleophile is the Cys-101. Cys-101 and Cys-197 are joined by a disulfide. Gly-125 contacts ATP. The segment at 147–149 (KDQ) is interaction with tRNA. Cys-197 acts as the Cysteine persulfide intermediate in catalysis. An interaction with tRNA region spans residues 302-303 (RY).

Belongs to the MnmA/TRMU family.

The protein resides in the cytoplasm. The enzyme catalyses S-sulfanyl-L-cysteinyl-[protein] + uridine(34) in tRNA + AH2 + ATP = 2-thiouridine(34) in tRNA + L-cysteinyl-[protein] + A + AMP + diphosphate + H(+). Its function is as follows. Catalyzes the 2-thiolation of uridine at the wobble position (U34) of tRNA, leading to the formation of s(2)U34. In Syntrophotalea carbinolica (strain DSM 2380 / NBRC 103641 / GraBd1) (Pelobacter carbinolicus), this protein is tRNA-specific 2-thiouridylase MnmA.